The sequence spans 418 residues: Putative ion-transport protein YfeO (418 aa).

12 consecutive transmembrane segments (helical) span residues 10-30 (LLLS…LIMV), 54-74 (DSPL…GLVI), 99-119 (ALPG…SLGP), 120-140 (EHPI…RLLP), 149-169 (ILAS…AALI), 186-206 (LFAP…FFHP), 223-243 (ILSG…AVWC), 258-278 (VFVL…GGPV), 300-320 (DYFL…ASGF), 322-342 (GGRI…LHEH), 343-363 (VPAV…VLVV), and 371-391 (LFMA…CIVM).

Belongs to the chloride channel (TC 2.A.49) family.

The protein localises to the cell membrane. This chain is Putative ion-transport protein YfeO, found in Escherichia coli O127:H6 (strain E2348/69 / EPEC).